Consider the following 121-residue polypeptide: Amelogenin (121 aa).

Residues leucine 1 to serine 121 form a disordered region. Polar residues-rich tracts occupy residues serine 10 to leucine 19 and histidine 47 to leucine 59. Residues proline 60 to alanine 84 are compositionally biased toward low complexity. Positions proline 85–serine 121 are enriched in pro residues.

It belongs to the amelogenin family.

Its subcellular location is the secreted. The protein resides in the extracellular space. It localises to the extracellular matrix. Plays a role in the biomineralization of teeth. Seems to regulate the formation of crystallites during the secretory stage of tooth enamel development. Thought to play a major role in the structural organization and mineralization of developing enamel. The polypeptide is Amelogenin (AMEL) (Tachyglossus aculeatus aculeatus (Southeast Australian short-beaked echidna)).